Reading from the N-terminus, the 524-residue chain is Decreased expression in renal and prostate cancer protein (524 aa).

Over residues M1 to P12 the composition is skewed to basic and acidic residues. 2 disordered regions span residues M1 to P43 and P64 to R252. The span at L129 to G148 shows a compositional bias: low complexity. Residues G163–S181 show a composition bias toward gly residues. S302 is modified (phosphoserine). Residues P312–G323 show a composition bias toward low complexity. The disordered stretch occupies residues P312 to S332. R364 bears the Asymmetric dimethylarginine mark. R387 carries the post-translational modification Omega-N-methylarginine. S423 carries the phosphoserine modification.

It belongs to the DERPC family. Ubiquitously expressed, with abundant expression in kidney, skeletal muscle, testis, liver, ovary, and heart and moderate expression in prostate. Expression is significantly reduced in renal and prostate tumors. No differential expression in breast cancer cells, between lobular carcinoma and normal lobules.

The protein localises to the nucleus. Its function is as follows. Potential tumor suppressor. Inhibits prostate tumor cell growth, when overexpressed. This is Decreased expression in renal and prostate cancer protein from Homo sapiens (Human).